Consider the following 327-residue polypeptide: Protoheme IX farnesyltransferase (327 aa).

The next 7 helical transmembrane spans lie at 55–75, 101–121, 124–144, 152–172, 180–200, 237–257, and 278–298; these read LVCT…LNCL, AAFV…VSGV, LAAG…TALL, IVVG…AATG, WLFA…ALLL, FLGI…ILPF, and AKGL…LLVM.

The protein belongs to the UbiA prenyltransferase family. Protoheme IX farnesyltransferase subfamily.

It localises to the cell inner membrane. It catalyses the reaction heme b + (2E,6E)-farnesyl diphosphate + H2O = Fe(II)-heme o + diphosphate. It participates in porphyrin-containing compound metabolism; heme O biosynthesis; heme O from protoheme: step 1/1. Converts heme B (protoheme IX) to heme O by substitution of the vinyl group on carbon 2 of heme B porphyrin ring with a hydroxyethyl farnesyl side group. The polypeptide is Protoheme IX farnesyltransferase (Synechococcus sp. (strain CC9311)).